Reading from the N-terminus, the 520-residue chain is GMP synthase [glutamine-hydrolyzing] (520 aa).

The Glutamine amidotransferase type-1 domain maps to 9–202 (RVLIVDFGSQ…LFNIAGLKGD (194 aa)). The active-site Nucleophile is cysteine 86. Residues histidine 176 and glutamate 178 contribute to the active site. In terms of domain architecture, GMPS ATP-PPase spans 203 to 395 (WTMAAFRQEM…LGLAPAFVGR (193 aa)). 230–236 (SGGVDSS) serves as a coordination point for ATP.

Homodimer.

It catalyses the reaction XMP + L-glutamine + ATP + H2O = GMP + L-glutamate + AMP + diphosphate + 2 H(+). Its pathway is purine metabolism; GMP biosynthesis; GMP from XMP (L-Gln route): step 1/1. Functionally, catalyzes the synthesis of GMP from XMP. The protein is GMP synthase [glutamine-hydrolyzing] of Caulobacter vibrioides (strain ATCC 19089 / CIP 103742 / CB 15) (Caulobacter crescentus).